Consider the following 1192-residue polypeptide: Leucine-rich repeat receptor protein kinase EMS1 (1192 aa).

The signal sequence occupies residues 1–18; sequence MAFLTALFLFLFFSFSSS. The N-linked (GlcNAc...) asparagine glycan is linked to N47. 28 LRR repeats span residues 64–87, 90–112, 114–137, 138–160, 163–185, 187–209, 235–257, 259–281, 283–304, 330–352, 354–376, 378–400, 402–425, 426–447, 449–471, 473–496, 497–520, 521–543, 545–567, 581–603, 605–628, 629–651, 653–675, 677–697, 701–723, 725–748, 749–772, and 773–795; these read LGRVNSLSLPSLSLRGQIPKEISS, NLRELCLAGNQFSGKIPPEIWNL, HLQTLDLSGNSLTGLLPRLLSELP, QLLYLDLSDNHFSGSLPPSFFIS, ALSSLDVSNNSLSGEIPPEIGKL, NLSNLYMGLNSFSGQIPSEIGNI, HLAKLDLSYNPLKCSIPKSFGEL, NLSILNLVSAELIGLIPPELGNC, SLKSLMLSFNSLSGPLPLELSE, VLDSLLLANNRFSGEIPHEIEDC, MLKHLSLASNLLSGSIPRELCGS, SLEAIDLSGNLLSGTIEEVFDGC, SLGELLLTNNQINGSIPEDLWKLP, LMALDLDSNNFTGEIPKSLWKS, NLMEFTASYNRLEGYLPAEIGNA, SLKRLVLSDNQLTGEIPREIGKLT, SLSVLNLNANMFQGKIPVELGDCT, SLTTLDLGSNNLQGQIPDKITAL, QLQCLVLSYNNLSGSIPSKPSAY, HHGIFDLSYNRLSGPIPEELGEC, VLVEISLSNNHLSGEIPASLSRLT, NLTILDLSGNALTGSIPKEMGNS, KLQGLNLANNQLNGHIPESFGLL, SLVKLNLTKNKLDGPVPASLG, ELTHMDLSFNNLSGELSSELSTM, KLVGLYIEQNKFTGEIPSELGNLT, QLEYLDVSENLLSGEIPTKICGLP, and NLEFLNLAKNNLRGEVPSDGVCQ. N-linked (GlcNAc...) asparagine glycosylation is found at N171, N187, and N208. N259 carries N-linked (GlcNAc...) asparagine glycosylation. N-linked (GlcNAc...) asparagine glycosylation is found at N414 and N435. N555 is a glycosylation site (N-linked (GlcNAc...) asparagine). N-linked (GlcNAc...) asparagine glycosylation occurs at N629. N-linked (GlcNAc...) asparagine glycans are attached at residues N682, N711, and N746. The chain crosses the membrane as a helical span at residues 828–848; the sequence is WGIAGLMLGFTIIVFVFVFSL. T914 carries the phosphothreonine modification. The Protein kinase domain maps to 917 to 1192; sequence FSKKNIIGDG…LDVLKALKEI (276 aa). Residues 923–931 and K945 contribute to the ATP site; that span reads IGDGGFGTV. The residue at position 990 (Y990) is a Phosphotyrosine. D1043 acts as the Proton acceptor in catalysis. A Phosphotyrosine modification is found at Y1085.

This sequence belongs to the protein kinase superfamily. Ser/Thr protein kinase family. In terms of assembly, interacts with TPD1. Autophosphorylates in vitro. As to expression, present in young buds, open flowers and siliques but absent from mature leaves and roots. Strongly expressed in the young organ primordia, and as the anthers and ovules developed, became focused in the microsporangia and in the distal and chalazal regions of the ovule. In cv. Landsberg erecta, only expressed in the anthers of young floral buds.

It localises to the cell membrane. The enzyme catalyses L-seryl-[protein] + ATP = O-phospho-L-seryl-[protein] + ADP + H(+). The catalysed reaction is L-threonyl-[protein] + ATP = O-phospho-L-threonyl-[protein] + ADP + H(+). Functionally, receptor with a serine/threonine-protein kinase activity required for the specification of the correct number of male archesporial initials and for the subsequent specification of tapetal and middle cell layer identities. In seeds, required for enhancing cell size and the rate of embryonic development. This chain is Leucine-rich repeat receptor protein kinase EMS1, found in Arabidopsis thaliana (Mouse-ear cress).